Reading from the N-terminus, the 427-residue chain is Zinc finger protein DPF3 (427 aa).

Positions 182–244 (LENDENADEV…NDAASQDDHD (63 aa)) are disordered. Positions 184 to 199 (NDENADEVNEEEDLEE) are enriched in acidic residues. The segment covering 233-244 (RRNDAASQDDHD) has biased composition (basic and acidic residues). The segment at 247–270 (YVCDICGKRYKNRPGLSYHYAHTH) adopts a C2H2-type zinc-finger fold. The interval 272–301 (ASEEGDEAREQETRSSPVHRNENHKPQKGP) is disordered. Residues 279–296 (AREQETRSSPVHRNENHK) show a composition bias toward basic and acidic residues. PHD-type zinc fingers lie at residues 308 to 368 (NNYC…CKSC) and 365 to 415 (CKSC…CREL).

This sequence belongs to the requiem/DPF family. As to quaternary structure, component of the BAF complex. Interacts with acetylated histones H3 and H4. Component of neuron-specific chromatin remodeling complex (nBAF complex), a subfamily of ATP-dependent SWI/SNF chromatin remodeling complexes. In terms of tissue distribution, expressed in the heart and somites.

The protein localises to the nucleus. Muscle-specific component of the BAF complex, a multiprotein complex involved in transcriptional activation and repression of select genes by chromatin remodeling (alteration of DNA-nucleosome topology). Specifically binds acetylated lysines on histone 3 and 4. In the complex, it acts as a tissue-specific anchor between histone acetylations and methylations and chromatin remodeling. It thereby probably plays an essential role in heart and skeletal muscle development. Belongs to the neuron-specific chromatin remodeling complex (nBAF complex) and plays a role in neural development. The polypeptide is Zinc finger protein DPF3 (DPF3) (Gallus gallus (Chicken)).